Here is a 244-residue protein sequence, read N- to C-terminus: MAQWWQILLGLWAVLPTLAGDKLLSVCMNSKRHKQEPGPEDELYQECRPWEDNACCTRSTSWEAHLEEPLLFNFSMMHCGLLTPACRKHFIQAICFHECSPNLGPWIQPVVPNGQEEQRVWGVPLCQEDCEDWWRACHSSLTCKSNWLHGWDWSEEKKHCPAHEPCLPFSYHFPTPDDLCEKIWNNTFKASPERRNSGRCLQKWFEPTLSNPNVEVALHFAGSALAPQLSYTLPAFSLCLLFHP.

Positions 1 to 19 (MAQWWQILLGLWAVLPTLA) are cleaved as a signal peptide. Cystine bridges form between Cys27–Cys55, Cys47–Cys95, Cys56–Cys99, Cys79–Cys166, Cys86–Cys137, Cys126–Cys200, Cys130–Cys180, and Cys143–Cys160. The tract at residues 62–81 (WEAHLEEPLLFNFSMMHCGL) is important for interaction with IZUMO1. Asn73 carries an N-linked (GlcNAc...) asparagine glycan. Asn185 carries an N-linked (GlcNAc...) asparagine glycan. Residue Gly222 is the site of GPI-anchor amidated glycine attachment. Residues 223-244 (SALAPQLSYTLPAFSLCLLFHP) constitute a propeptide that is removed on maturation.

This sequence belongs to the folate receptor family. Monomer. Interacts with IZUMO1; the interaction is direct. IZUMO1 and IZUMO1R/JUNO form a complex with 1:1 stoichiometry. Interacts with WDR54. In terms of processing, the protein is rapidly cleaved following fertilization, being only weakly detectable in zona-intact fertilized eggs at telophase II and undetectable at the pronuclear stage. Sheding is probably required to block to polyspermy and ensuring egg fusion with a single sperm. As to expression, widely expressed with higher expression in thymus, spleen and lung. Present at the cell surface of unfertilized oocytes, while it is barely detectable 30 to 40 minutes after fertilization (at protein level).

It localises to the cell membrane. Its function is as follows. Receptor for IZUMO1 present at the cell surface of oocytes (oolemma), which is essential for species-specific gamete recognition and fertilization. The IZUMO1:IZUMO1R/JUNO interaction is a necessary adhesion event between sperm and egg that is required for fertilization but is not sufficient for cell fusion. The ligand-receptor interaction probably does not act as a membrane 'fusogen'. Does not bind folate. This Mus musculus (Mouse) protein is Sperm-egg fusion protein Juno.